A 246-amino-acid chain; its full sequence is MSTSAADTLSRPSGRAVDALRPFSLERGFTRYAEGSVLVRAGNTHVLCTASVLEKVPPFLKGRGEGWVTAEYGMLPRATHTRGDREAARGKQSGRTQEIQRLIGRSLRAVFDLRLLGERTLHLDCDVLQADGGTRCASITGAWVAAADAVALLMQRGDLAHNPIRDAVAAVSVGLVDGRAVLDLDYQEDSACAADVNVVMTGSGAFVEVQGTGEGATFTRGELDTMLGLAEGGIAQLVRAQREALQ.

Phosphate is bound by residues R95 and 133–135; that span reads GTR.

This sequence belongs to the RNase PH family. Homohexameric ring arranged as a trimer of dimers.

The catalysed reaction is tRNA(n+1) + phosphate = tRNA(n) + a ribonucleoside 5'-diphosphate. In terms of biological role, phosphorolytic 3'-5' exoribonuclease that plays an important role in tRNA 3'-end maturation. Removes nucleotide residues following the 3'-CCA terminus of tRNAs; can also add nucleotides to the ends of RNA molecules by using nucleoside diphosphates as substrates, but this may not be physiologically important. Probably plays a role in initiation of 16S rRNA degradation (leading to ribosome degradation) during starvation. This is Ribonuclease PH from Bordetella bronchiseptica (strain ATCC BAA-588 / NCTC 13252 / RB50) (Alcaligenes bronchisepticus).